The following is a 495-amino-acid chain: Alpha,alpha-trehalose-phosphate synthase [UDP-forming] 56 kDa subunit (495 aa).

Residues tyrosine 102 and aspartate 156 each contribute to the D-glucose 6-phosphate site. UDP is bound by residues arginine 293 and lysine 298. Arginine 293 and lysine 298 together coordinate UDP-alpha-D-glucose. D-glucose 6-phosphate is bound at residue arginine 331. Residues isoleucine 370 and leucine 396 to glutamate 400 contribute to the UDP site. UDP-alpha-D-glucose-binding positions include isoleucine 370 and aspartate 392–glutamate 400.

This sequence belongs to the glycosyltransferase 20 family. As to quaternary structure, the trehalose synthase complex is composed of the two catalytic subunits TPS1 and TPS2 and at least one of the two regulatory subunits TPS3 or TSL1.

The protein localises to the cytoplasm. It carries out the reaction D-glucose 6-phosphate + UDP-alpha-D-glucose = alpha,alpha-trehalose 6-phosphate + UDP + H(+). Its pathway is carbohydrate biosynthesis. Activated by fructose 6-phosphate. Inorganic phosphate inhibits the synthase activity in the complex, but activates the synthase activity in the free monomeric form. In terms of biological role, synthase catalytic subunit of the trehalose synthase complex that catalyzes the production of trehalose from glucose-6-phosphate and UDP-alpha-D-glucose in a two step process. Can function independently of the complex. This chain is Alpha,alpha-trehalose-phosphate synthase [UDP-forming] 56 kDa subunit, found in Saccharomyces cerevisiae (strain ATCC 204508 / S288c) (Baker's yeast).